The sequence spans 234 residues: Transcription factor UDT1 (234 aa).

The tract at residues 1–51 is disordered; sequence MPRRARARGGGGGGGEEVKVEDDFIDSVLNFGGGGGGEEDGDDGEEEQQQQ. Positions 37–48 are enriched in acidic residues; the sequence is GEEDGDDGEEEQ. Residues 61–74 form a basic motif; degenerate region; the sequence is EFKSKNLEAERRRR. In terms of domain architecture, bHLH spans 61–110; the sequence is EFKSKNLEAERRRRGRLNGNIFALRAVVPKITKMSKEATLSDAIEHIKNL. Positions 75-110 are helix-loop-helix motif; sequence GRLNGNIFALRAVVPKITKMSKEATLSDAIEHIKNL.

The protein belongs to the bHLH protein family.

The protein localises to the nucleus. Its function is as follows. Transcription factor that plays a crucial role in tapetum development. Required for male fertility and pollen differentiation within the developing anther. Plays a major role in maintaining tapetum development, starting in early meiosis. Required for pollen mother cell meiosis. May regulate the anther-specific cysteine protease CP1 and lipid-transfer proteins C4 and C6. Required for anther development. Functions in parallel with GAMYB to regulate early anther development. Functions upstream of the transcription factor TDR and may positively regulate its transcription. This is Transcription factor UDT1 from Oryza sativa subsp. japonica (Rice).